A 257-amino-acid polypeptide reads, in one-letter code: Imidazole glycerol phosphate synthase subunit HisF (257 aa).

Residues aspartate 12 and aspartate 131 contribute to the active site.

This sequence belongs to the HisA/HisF family. Heterodimer of HisH and HisF.

Its subcellular location is the cytoplasm. The enzyme catalyses 5-[(5-phospho-1-deoxy-D-ribulos-1-ylimino)methylamino]-1-(5-phospho-beta-D-ribosyl)imidazole-4-carboxamide + L-glutamine = D-erythro-1-(imidazol-4-yl)glycerol 3-phosphate + 5-amino-1-(5-phospho-beta-D-ribosyl)imidazole-4-carboxamide + L-glutamate + H(+). It functions in the pathway amino-acid biosynthesis; L-histidine biosynthesis; L-histidine from 5-phospho-alpha-D-ribose 1-diphosphate: step 5/9. Its function is as follows. IGPS catalyzes the conversion of PRFAR and glutamine to IGP, AICAR and glutamate. The HisF subunit catalyzes the cyclization activity that produces IGP and AICAR from PRFAR using the ammonia provided by the HisH subunit. In Paraburkholderia phytofirmans (strain DSM 17436 / LMG 22146 / PsJN) (Burkholderia phytofirmans), this protein is Imidazole glycerol phosphate synthase subunit HisF.